A 232-amino-acid chain; its full sequence is MSNVDHAEIAKFEALAHRWWDRESEFKPLHDINPLRVNWIDERVGLAGKKVLDVGCGGGILSEAMAQRGATVTGIDMGEAPLAVAQLHQLESGVNVEYRQITAEALAEEMPEQFDVVTCLEMLEHVPDPSSVIRACFRMVKPGGQVFFSTINRNPKAYLFAIIGAEYIMKLLPRGTHDFKKFIRPSELGAWSRSAGLTVKDIIGLTYNPLTKHYKLAPDVDVNYMIQTLREE.

The S-adenosyl-L-methionine site is built by arginine 36, glycine 55, aspartate 76, and leucine 120.

This sequence belongs to the methyltransferase superfamily. UbiG/COQ3 family.

The enzyme catalyses a 3-demethylubiquinol + S-adenosyl-L-methionine = a ubiquinol + S-adenosyl-L-homocysteine + H(+). It carries out the reaction a 3-(all-trans-polyprenyl)benzene-1,2-diol + S-adenosyl-L-methionine = a 2-methoxy-6-(all-trans-polyprenyl)phenol + S-adenosyl-L-homocysteine + H(+). It participates in cofactor biosynthesis; ubiquinone biosynthesis. Its function is as follows. O-methyltransferase that catalyzes the 2 O-methylation steps in the ubiquinone biosynthetic pathway. The sequence is that of Ubiquinone biosynthesis O-methyltransferase from Pseudomonas fluorescens (strain ATCC BAA-477 / NRRL B-23932 / Pf-5).